Consider the following 366-residue polypeptide: Histidinol-phosphate aminotransferase (366 aa).

N6-(pyridoxal phosphate)lysine is present on Lys-222.

It belongs to the class-II pyridoxal-phosphate-dependent aminotransferase family. Histidinol-phosphate aminotransferase subfamily. Homodimer. The cofactor is pyridoxal 5'-phosphate.

It catalyses the reaction L-histidinol phosphate + 2-oxoglutarate = 3-(imidazol-4-yl)-2-oxopropyl phosphate + L-glutamate. It functions in the pathway amino-acid biosynthesis; L-histidine biosynthesis; L-histidine from 5-phospho-alpha-D-ribose 1-diphosphate: step 7/9. In Lysinibacillus sphaericus (strain C3-41), this protein is Histidinol-phosphate aminotransferase.